Reading from the N-terminus, the 631-residue chain is Transforming acidic coiled-coil-containing protein 3 (631 aa).

Ser-2 is subject to N-acetylserine. A Phosphoserine modification is found at Ser-39. The span at 42 to 59 (ENVPPQSQAKATNVTFQT) shows a compositional bias: polar residues. The disordered stretch occupies residues 42 to 70 (ENVPPQSQAKATNVTFQTPPRDPQTHRIL). Residue Ser-71 is modified to Phosphoserine. Necessary but not sufficient for spindle localization regions lie at residues 311 to 366 (EESF…PMPV) and 384 to 631 (KPTE…MEKI). Ser-347 is modified (phosphoserine; by AURKA). Positions 363 to 385 (PMPVAPITNSTQDTEEESGSGKP) are disordered. Positions 431–630 (QKDLDAVVNV…CDDLISKMEK (200 aa)) form a coiled coil.

This sequence belongs to the TACC family. Interacts with GCN5L2 and PCAF. The coiled coil C-terminal region interacts with AH receptor nuclear translocator protein (ARNT) and ARNT2. Interacts with CCDC100/CEP120. Interacts with CKAP5 independently of clathrin. Interacts with CKAP5 and clathrin forming the TACC3/ch-TOG/clathrin complex located at spindle inter-microtubules bridges; TACC3 (phosphorylated at Ser-347 by AURKA) and CLTC are proposed to form a composite microtubule interaction surface. As to expression, embryonically expressed.

Its subcellular location is the cytoplasm. It localises to the cytoskeleton. It is found in the microtubule organizing center. The protein localises to the centrosome. The protein resides in the spindle pole. In terms of biological role, plays a role in the microtubule-dependent coupling of the nucleus and the centrosome. Involved in the processes that regulate centrosome-mediated interkinetic nuclear migration (INM) of neural progenitors. Acts as a component of the TACC3/ch-TOG/clathrin complex proposed to contribute to stabilization of kinetochore fibers of the mitotic spindle by acting as inter-microtubule bridge. The TACC3/ch-TOG/clathrin complex is required for the maintenance of kinetochore fiber tension. May be involved in the control of cell growth and differentiation. May have a role in embryonic development. The sequence is that of Transforming acidic coiled-coil-containing protein 3 (Tacc3) from Mus musculus (Mouse).